A 333-amino-acid polypeptide reads, in one-letter code: Transaldolase (333 aa).

Residue lysine 136 is the Schiff-base intermediate with substrate of the active site.

Belongs to the transaldolase family. Type 1 subfamily. Homodimer.

The protein localises to the cytoplasm. The catalysed reaction is D-sedoheptulose 7-phosphate + D-glyceraldehyde 3-phosphate = D-erythrose 4-phosphate + beta-D-fructose 6-phosphate. It participates in carbohydrate degradation; pentose phosphate pathway; D-glyceraldehyde 3-phosphate and beta-D-fructose 6-phosphate from D-ribose 5-phosphate and D-xylulose 5-phosphate (non-oxidative stage): step 2/3. Functionally, transaldolase is important for the balance of metabolites in the pentose-phosphate pathway. In Acidobacterium capsulatum (strain ATCC 51196 / DSM 11244 / BCRC 80197 / JCM 7670 / NBRC 15755 / NCIMB 13165 / 161), this protein is Transaldolase.